Reading from the N-terminus, the 338-residue chain is Glutamate/glutamine/aspartate/asparagine-binding protein BztA (338 aa).

The N-terminal stretch at 1 to 22 (MKKSAFFGSVALAALVAGAASA) is a signal peptide.

Belongs to the bacterial solute-binding protein 3 family.

The protein resides in the periplasm. Functionally, part of a binding-protein-dependent transport system for glutamate, glutamine, aspartate and asparagine. The protein is Glutamate/glutamine/aspartate/asparagine-binding protein BztA (bztA) of Rhodobacter capsulatus (strain ATCC BAA-309 / NBRC 16581 / SB1003).